A 140-amino-acid chain; its full sequence is Protein SNA4 (140 aa).

At 1-8 (MCCYCVCC) the chain is on the cytoplasmic side. 5 S-palmitoyl cysteine lipidation sites follow: C2, C3, C5, C7, and C8. The helical transmembrane segment at 9–29 (TVSDFILYIVAFFFPPAAVLL) threads the bilayer. Topologically, residues 30–41 (RSGPCSSDFLLN) are vacuolar. The helical transmembrane segment at 42–62 (VLLTLLGFLPGMLHAFYYITI) threads the bilayer. Topologically, residues 63-140 (TSPLRNAEYV…LVESPPPYVP (78 aa)) are cytoplasmic. The disordered stretch occupies residues 84–140 (RNVPSNRPQNSQTPQNRPQQGSSARNVYPSVETPLLQGAAPHDNKQSLVESPPPYVP). Positions 85-108 (NVPSNRPQNSQTPQNRPQQGSSAR) are enriched in polar residues. A Glycyl lysine isopeptide (Lys-Gly) (interchain with G-Cter in ubiquitin) cross-link involves residue K128. S134 bears the Phosphoserine mark.

Belongs to the UPF0057 (PMP3) family.

Its subcellular location is the vacuole membrane. This chain is Protein SNA4 (SNA4), found in Saccharomyces cerevisiae (strain ATCC 204508 / S288c) (Baker's yeast).